We begin with the raw amino-acid sequence, 64 residues long: Alpha-conotoxin CnIA (64 aa).

Positions 1-21 are cleaved as a signal peptide; that stretch reads MGMRMMFTVFLLVVLTTTVVS. Residues 22-47 constitute a propeptide that is removed on maturation; that stretch reads FPSDSASDGRDDEAKDERSDIYESKR. 2 disulfides stabilise this stretch: Cys-51-Cys-56 and Cys-52-Cys-62. Pro-54 bears the 4-hydroxyproline; in CnIK; partial mark. Position 62 is a cysteine amide (Cys-62).

Belongs to the conotoxin A superfamily. Expressed by the venom duct.

The protein resides in the secreted. In terms of biological role, alpha-conotoxins act on postsynaptic membranes, they bind to the nicotinic acetylcholine receptors (nAChR) and thus inhibit them. CnIA and CnIB block muscular nAChR alpha-1/gamma and alpha-1/delta subunits. This Conus consors (Singed cone) protein is Alpha-conotoxin CnIA.